The following is a 3681-amino-acid chain: E3 ubiquitin-protein ligase UPL1 (3681 aa).

Basic and acidic residues predominate over residues 882–891 (DEKKSVDRGS). Positions 882–912 (DEKKSVDRGSDNSVSASSSTAERESDEDSSN) are disordered. The span at 892 to 901 (DNSVSASSST) shows a compositional bias: low complexity. Residues 1269–1310 (QLDESIVGMIVEMGFSRSRAEIALRRVGTNSVEMAMDWLFTN) form the UBA domain. Residues 1316–1335 (QEDDELAQALALSLGNSSET) enclose the UIM domain. 10 disordered regions span residues 1332–1358 (SSETPKLEDTEKPVDVPQEEAEPKEPP), 1768–1802 (MEVDEPTTKVKGKSKVGEPEKASSSRVGEPEKAEI), 2015–2094 (EQLK…MRIE), 2125–2151 (ENRADDDVDDDMGDEGEDDEGDDEDAD), 2253–2287 (RQTGRSSLDRSGSEVHGFQHPLFSRPSQTGNTASV), 2401–2435 (NTTEIQEQLHPDVPPSVGSETVLGDGNEGGQQSEE), 2483–2505 (PLPLNSTPNEIDRMEVGEGDGAP), 2537–2606 (IAPP…APEV), 2975–3003 (SPSSGVPEKLENKPVGEEASSETRKDAES), and 3228–3254 (TAGEVKESSAHGSSSKTSVDSQKKTDG). Composition is skewed to basic and acidic residues over residues 1336 to 1345 (PKLEDTEKPV), 1782 to 1802 (KVGEPEKASSSRVGEPEKAEI), and 2017 to 2037 (LKSEVPNEKKNRDSDERHDSH). Positions 2038 to 2087 (GNSTETEADELNQNNSSLQQVTDAAGNGQEQAQVSSQSAGERGSSQTQAM) are enriched in polar residues. A compositionally biased stretch (acidic residues) spans 2130–2151 (DDVDDDMGDEGEDDEGDDEDAD). The span at 2253–2265 (RQTGRSSLDRSGS) shows a compositional bias: basic and acidic residues. The span at 2277 to 2287 (RPSQTGNTASV) shows a compositional bias: polar residues. Position 2598 is a phosphoserine (serine 2598). The segment covering 2982–3002 (EKLENKPVGEEASSETRKDAE) has biased composition (basic and acidic residues). Positions 3237–3247 (AHGSSSKTSVD) are enriched in polar residues. The HECT domain maps to 3340 to 3681 (SPQDLKGRLN…HEASEGFGFA (342 aa)). The active-site Glycyl thioester intermediate is cysteine 3648.

The protein belongs to the UPL family. TOM1/PTR1 subfamily. Widely expressed. Expressed in root, stem, cauline and rosette leaf, seedling and flower (at protein level).

The enzyme catalyses S-ubiquitinyl-[E2 ubiquitin-conjugating enzyme]-L-cysteine + [acceptor protein]-L-lysine = [E2 ubiquitin-conjugating enzyme]-L-cysteine + N(6)-ubiquitinyl-[acceptor protein]-L-lysine.. It participates in protein modification; protein ubiquitination. Functionally, probable E3 ubiquitin-protein ligase which mediates ubiquitination and subsequent proteasomal degradation of target proteins. In Arabidopsis thaliana (Mouse-ear cress), this protein is E3 ubiquitin-protein ligase UPL1 (UPL1).